The sequence spans 101 residues: Small ribosomal subunit protein uS14A (101 aa).

A disordered region spans residues 28 to 57; that stretch reads KDIIRSPSSAPEQRSTAQRALARQPRDASP. The segment covering 33 to 45 has biased composition (polar residues); sequence SPSSAPEQRSTAQ.

Belongs to the universal ribosomal protein uS14 family. Part of the 30S ribosomal subunit. Contacts proteins S3 and S10.

In terms of biological role, binds 16S rRNA, required for the assembly of 30S particles and may also be responsible for determining the conformation of the 16S rRNA at the A site. This Mycobacterium bovis (strain ATCC BAA-935 / AF2122/97) protein is Small ribosomal subunit protein uS14A.